We begin with the raw amino-acid sequence, 421 residues long: Gamma-glutamyl phosphate reductase (421 aa).

Belongs to the gamma-glutamyl phosphate reductase family.

It is found in the cytoplasm. It catalyses the reaction L-glutamate 5-semialdehyde + phosphate + NADP(+) = L-glutamyl 5-phosphate + NADPH + H(+). It participates in amino-acid biosynthesis; L-proline biosynthesis; L-glutamate 5-semialdehyde from L-glutamate: step 2/2. Functionally, catalyzes the NADPH-dependent reduction of L-glutamate 5-phosphate into L-glutamate 5-semialdehyde and phosphate. The product spontaneously undergoes cyclization to form 1-pyrroline-5-carboxylate. The protein is Gamma-glutamyl phosphate reductase of Brucella abortus (strain 2308).